A 380-amino-acid polypeptide reads, in one-letter code: Cytochrome b (380 aa).

4 consecutive transmembrane segments (helical) span residues 34–54 (FGSL…LLAM), 78–99 (WLIR…YLHI), 114–134 (WNTG…GYVL), and 179–199 (FFAL…IHLT). Positions 84 and 98 each coordinate heme b. H183 and H197 together coordinate heme b. An a ubiquinone-binding site is contributed by H202. 4 helical membrane-spanning segments follow: residues 227-247 (IKDI…ALFS), 289-309 (LGGV…PFLH), 321-341 (FSQL…WVGS), and 348-368 (FIII…ILFP).

The protein belongs to the cytochrome b family. As to quaternary structure, the cytochrome bc1 complex contains 11 subunits: 3 respiratory subunits (MT-CYB, CYC1 and UQCRFS1), 2 core proteins (UQCRC1 and UQCRC2) and 6 low-molecular weight proteins (UQCRH/QCR6, UQCRB/QCR7, UQCRQ/QCR8, UQCR10/QCR9, UQCR11/QCR10 and a cleavage product of UQCRFS1). This cytochrome bc1 complex then forms a dimer. Requires heme b as cofactor.

It is found in the mitochondrion inner membrane. Component of the ubiquinol-cytochrome c reductase complex (complex III or cytochrome b-c1 complex) that is part of the mitochondrial respiratory chain. The b-c1 complex mediates electron transfer from ubiquinol to cytochrome c. Contributes to the generation of a proton gradient across the mitochondrial membrane that is then used for ATP synthesis. The protein is Cytochrome b (MT-CYB) of Numida meleagris (Helmeted guineafowl).